We begin with the raw amino-acid sequence, 48 residues long: MSNSQAPMQAVEVRVYPIFTVRWLAVHALAIPSVFFLGAIAAMQFISR.

A helical transmembrane segment spans residues 23-39 (WLAVHALAIPSVFFLGA). His27 is a binding site for heme.

The protein belongs to the PsbE/PsbF family. Heterodimer of an alpha subunit and a beta subunit. PSII is composed of 1 copy each of membrane proteins PsbA, PsbB, PsbC, PsbD, PsbE, PsbF, PsbH, PsbI, PsbJ, PsbK, PsbL, PsbM, PsbT, PsbX, PsbY, Psb30/Ycf12, peripheral proteins PsbO, CyanoQ (PsbQ), PsbU, PsbV and a large number of cofactors. It forms dimeric complexes. Requires heme b as cofactor.

Its subcellular location is the cellular thylakoid membrane. Functionally, this b-type cytochrome is tightly associated with the reaction center of photosystem II (PSII). PSII is a light-driven water:plastoquinone oxidoreductase that uses light energy to abstract electrons from H(2)O, generating O(2) and a proton gradient subsequently used for ATP formation. It consists of a core antenna complex that captures photons, and an electron transfer chain that converts photonic excitation into a charge separation. This chain is Cytochrome b559 subunit beta, found in Prochlorococcus marinus (strain MIT 9515).